A 200-amino-acid polypeptide reads, in one-letter code: Recombination protein RecR (200 aa).

Residues 58–75 form a C4-type zinc finger; that stretch reads CSNCFCLKISQTSPCNFC. The Toprim domain occupies 82-177; the sequence is SSLCIVATPK…KISRLALGMP (96 aa).

This sequence belongs to the RecR family.

In terms of biological role, may play a role in DNA repair. It seems to be involved in an RecBC-independent recombinational process of DNA repair. It may act with RecF and RecO. This is Recombination protein RecR from Chlamydia trachomatis serovar D (strain ATCC VR-885 / DSM 19411 / UW-3/Cx).